A 283-amino-acid polypeptide reads, in one-letter code: Polyamine aminopropyltransferase (283 aa).

A PABS domain is found at T5–S238. Residue Q32 coordinates S-methyl-5'-thioadenosine. Spermidine contacts are provided by H63 and D87. S-methyl-5'-thioadenosine contacts are provided by residues E107 and D139–G140. The Proton acceptor role is filled by D158. Residue D158–D161 coordinates spermidine.

The protein belongs to the spermidine/spermine synthase family. In terms of assembly, homodimer or homotetramer.

It localises to the cytoplasm. The enzyme catalyses S-adenosyl 3-(methylsulfanyl)propylamine + putrescine = S-methyl-5'-thioadenosine + spermidine + H(+). It participates in amine and polyamine biosynthesis; spermidine biosynthesis; spermidine from putrescine: step 1/1. Functionally, catalyzes the irreversible transfer of a propylamine group from the amino donor S-adenosylmethioninamine (decarboxy-AdoMet) to putrescine (1,4-diaminobutane) to yield spermidine. The sequence is that of Polyamine aminopropyltransferase from Prochlorococcus marinus (strain MIT 9215).